We begin with the raw amino-acid sequence, 255 residues long: Myogenic factor 5 (255 aa).

The bHLH domain maps to 83–134; that stretch reads DRRKAATMRERRRLKKVNQAFDTLKRCTTTNPNQRLPKVEILRNAIRYIESL. Residues 217-249 are disordered; that stretch reads SEQPGLPLQDPASLSPVASTDSQPATPGASSSR. Residues 232-249 are compositionally biased toward polar residues; the sequence is PVASTDSQPATPGASSSR.

Efficient DNA binding requires dimerization with another bHLH protein.

It is found in the nucleus. Functionally, acts as a transcriptional activator that promotes transcription of muscle-specific target genes and plays a role in muscle differentiation. Together with MYOG and MYOD1, co-occupies muscle-specific gene promoter core region during myogenesis. Induces fibroblasts to differentiate into myoblasts. Probable sequence specific DNA-binding protein. This Bos taurus (Bovine) protein is Myogenic factor 5 (MYF5).